The sequence spans 145 residues: D-aminoacyl-tRNA deacylase (145 aa).

A Gly-cisPro motif, important for rejection of L-amino acids motif is present at residues 137-138; the sequence is GP.

Belongs to the DTD family. In terms of assembly, homodimer.

The protein resides in the cytoplasm. The catalysed reaction is glycyl-tRNA(Ala) + H2O = tRNA(Ala) + glycine + H(+). It carries out the reaction a D-aminoacyl-tRNA + H2O = a tRNA + a D-alpha-amino acid + H(+). An aminoacyl-tRNA editing enzyme that deacylates mischarged D-aminoacyl-tRNAs. Also deacylates mischarged glycyl-tRNA(Ala), protecting cells against glycine mischarging by AlaRS. Acts via tRNA-based rather than protein-based catalysis; rejects L-amino acids rather than detecting D-amino acids in the active site. By recycling D-aminoacyl-tRNA to D-amino acids and free tRNA molecules, this enzyme counteracts the toxicity associated with the formation of D-aminoacyl-tRNA entities in vivo and helps enforce protein L-homochirality. The sequence is that of D-aminoacyl-tRNA deacylase from Salmonella choleraesuis (strain SC-B67).